A 149-amino-acid polypeptide reads, in one-letter code: Transcriptional repressor NrdR (149 aa).

A zinc finger lies at 3–34 (CPFCSIQETKVIDSRLVADGHQVRRRRECTMC). The region spanning 49–139 (PRVVKRDGSR…VYRSFEDIRE (91 aa)) is the ATP-cone domain.

This sequence belongs to the NrdR family. It depends on Zn(2+) as a cofactor.

In terms of biological role, negatively regulates transcription of bacterial ribonucleotide reductase nrd genes and operons by binding to NrdR-boxes. This is Transcriptional repressor NrdR from Pseudoalteromonas atlantica (strain T6c / ATCC BAA-1087).